The sequence spans 407 residues: M protein, serotype 2.1 (407 aa).

A signal peptide spans 1–41; it reads MARKDTNKQYSLRKLKTGTASVAVAVAVLGAGFANQTTVKA. The tract at residues 81–94 is 2 X 7 AA tandem repeats; that stretch reads VEEEHKKVEEEHKK. 4 stretches are compositionally biased toward basic and acidic residues: residues 83-144, 152-229, 237-264, and 272-288; these read EEHK…KRYQ, QLEK…EKQI, LSRD…EKQI, and LSRD…KVEA. Residues 83–289 are disordered; it reads EEHKKVEEEH…REAKKKVEAD (207 aa). 4 C repeats span residues 151-185, 186-220, 221-255, and 256-290; these read QQLE…EAEH, QKLK…EAEH, and QKLK…EADL. D repeat units follow at residues 323–328, 329–334, 337–342, and 344–349; these read AKLEAE, AKALKE, AKQAEE, and AKLKGN. Positions 344 to 382 are disordered; sequence AKLKGNQTPNAKVAPQANRSRSAMTQQKRTLPSTGETAN. Residues 360–380 are compositionally biased toward polar residues; sequence ANRSRSAMTQQKRTLPSTGET. An LPXTG sorting signal motif is present at residues 374 to 378; that stretch reads LPSTG. Threonine 377 is modified (pentaglycyl murein peptidoglycan amidated threonine). The propeptide at 378-407 is removed by sortase; the sequence is GETANPFFTAAAATVMVSAGMLALKRKEEN.

This sequence belongs to the M protein family.

Its subcellular location is the secreted. It localises to the cell wall. Functionally, this protein is one of the different antigenic serotypes of protein M. Protein M is closely associated with virulence of the bacterium and can render the organism resistant to phagocytosis. The chain is M protein, serotype 2.1 (emmL2.1) from Streptococcus pyogenes.